Here is a 206-residue protein sequence, read N- to C-terminus: uncharacterized protein (206 aa).

Positions Met1 to Ala18 are cleaved as a signal peptide.

This is an uncharacterized protein from Acanthamoeba polyphaga mimivirus (APMV).